The following is a 423-amino-acid chain: Methionine aminopeptidase 2 (423 aa).

Residues 1-17 (MTDVIDAKPEEAKKVPP) show a composition bias toward basic and acidic residues. Residues 1 to 89 (MTDVIDAKPE…IQPYKDDNAY (89 aa)) are disordered. The segment covering 18-29 (EVEDEDSGDESA) has biased composition (acidic residues). A compositionally biased stretch (basic residues) spans 41 to 54 (KKKKKKKKPKKKKK). A substrate-binding site is contributed by His176. Asp196, Asp207, and His276 together coordinate a divalent metal cation. His284 serves as a coordination point for substrate. A divalent metal cation is bound by residues Glu309 and Glu404.

The protein belongs to the peptidase M24A family. Methionine aminopeptidase eukaryotic type 2 subfamily. It depends on Co(2+) as a cofactor. Zn(2+) is required as a cofactor. Requires Mn(2+) as cofactor. The cofactor is Fe(2+).

The protein localises to the cytoplasm. The catalysed reaction is Release of N-terminal amino acids, preferentially methionine, from peptides and arylamides.. Functionally, cotranslationally removes the N-terminal methionine from nascent proteins. The N-terminal methionine is often cleaved when the second residue in the primary sequence is small and uncharged (Met-Ala-, Cys, Gly, Pro, Ser, Thr, or Val). The protein is Methionine aminopeptidase 2 of Schizophyllum commune (strain H4-8 / FGSC 9210) (Split gill fungus).